The primary structure comprises 231 residues: Cutinase 2 (231 aa).

The N-terminal stretch at 1-16 (MKFFALTTLLAATASA) is a signal peptide. Cys-48 and Cys-126 are joined by a disulfide. The active-site Nucleophile is the Ser-137. An intrachain disulfide couples Cys-188 to Cys-195. Residue Asp-192 is part of the active site. His-205 acts as the Proton donor/acceptor in catalysis.

This sequence belongs to the cutinase family. Post-translationally, the 2 disulfide bonds play a critical role in holding the catalytic residues in juxta-position; reduction of the disulfide bridges results in the complete inactivation of the enzyme.

It localises to the secreted. The catalysed reaction is cutin + H2O = cutin monomers.. In terms of biological role, catalyzes the hydrolysis of complex carboxylic polyesters found in the cell wall of plants. Degrades cutin, a macromolecule that forms the structure of the plant cuticle. Allows pathogenic fungi to penetrate through the cuticular barrier into the host plant during the initial stage of fungal infection. This chain is Cutinase 2 (CUT2), found in Fusarium vanettenii (Neocosmospora pisi).